The following is a 273-amino-acid chain: Glutamate 5-kinase (273 aa).

Lysine 15 contacts ATP. Substrate contacts are provided by serine 55, aspartate 142, and asparagine 158. ATP is bound by residues 178–179 (SD) and 220–226 (TGGMLSK).

The protein belongs to the glutamate 5-kinase family.

It localises to the cytoplasm. The enzyme catalyses L-glutamate + ATP = L-glutamyl 5-phosphate + ADP. It participates in amino-acid biosynthesis; L-proline biosynthesis; L-glutamate 5-semialdehyde from L-glutamate: step 1/2. Its function is as follows. Catalyzes the transfer of a phosphate group to glutamate to form L-glutamate 5-phosphate. The protein is Glutamate 5-kinase of Streptococcus pyogenes serotype M49 (strain NZ131).